Reading from the N-terminus, the 61-residue chain is Metallothionein-1A (61 aa).

Met1 carries the N-acetylmethionine modification. The tract at residues 1–29 (MDPNCSCPTGGSCSCAGSCTCKACRCTSC) is beta. Positions 5, 7, 13, 15, 19, 21, 24, 26, 29, 33, 34, 36, 37, 41, 44, 48, 50, and 57 each coordinate a divalent metal cation. Residues 30–61 (KKSCCSCCPAGCARCAQGCICKGASDKCSCCA) form an alpha region. Position 58 is a phosphoserine (Ser58). The a divalent metal cation site is built by Cys59 and Cys60.

This sequence belongs to the metallothionein superfamily. Type 1 family. As to quaternary structure, monomer.

Functionally, metallothioneins have a high content of cysteine residues that bind various heavy metals; these proteins are transcriptionally regulated by both heavy metals and glucocorticoids. The sequence is that of Metallothionein-1A (MT1A) from Sus scrofa (Pig).